Reading from the N-terminus, the 295-residue chain is 4-hydroxy-tetrahydrodipicolinate synthase (295 aa).

T47 is a pyruvate binding site. Catalysis depends on Y135, which acts as the Proton donor/acceptor. The active-site Schiff-base intermediate with substrate is K163. I204 contributes to the pyruvate binding site.

The protein belongs to the DapA family. As to quaternary structure, homotetramer; dimer of dimers.

It is found in the cytoplasm. It catalyses the reaction L-aspartate 4-semialdehyde + pyruvate = (2S,4S)-4-hydroxy-2,3,4,5-tetrahydrodipicolinate + H2O + H(+). It functions in the pathway amino-acid biosynthesis; L-lysine biosynthesis via DAP pathway; (S)-tetrahydrodipicolinate from L-aspartate: step 3/4. Functionally, catalyzes the condensation of (S)-aspartate-beta-semialdehyde [(S)-ASA] and pyruvate to 4-hydroxy-tetrahydrodipicolinate (HTPA). This chain is 4-hydroxy-tetrahydrodipicolinate synthase, found in Caldicellulosiruptor saccharolyticus (strain ATCC 43494 / DSM 8903 / Tp8T 6331).